Reading from the N-terminus, the 485-residue chain is Delta(14)-sterol reductase ERG24A (485 aa).

4 consecutive transmembrane segments (helical) span residues 18 to 38 (FFGP…VYVF), 77 to 97 (GLVS…SLIL), 131 to 151 (LAVL…WTFM), and 155 to 175 (FIQI…FVYV). Residue Asn-240 is glycosylated (N-linked (GlcNAc...) asparagine). The next 4 membrane-spanning stretches (helical) occupy residues 259–279 (ILIT…EPAI), 285–305 (ITTD…VPYV), 319–339 (SLGP…FYIF), and 431–451 (AQGW…ILLI).

Belongs to the ERG4/ERG24 family.

It localises to the endoplasmic reticulum membrane. The enzyme catalyses 4,4-dimethyl-5alpha-cholesta-8,24-dien-3beta-ol + NADP(+) = 4,4-dimethyl-5alpha-cholesta-8,14,24-trien-3beta-ol + NADPH + H(+). The protein operates within steroid metabolism; ergosterol biosynthesis. Delta(14)-sterol reductase; part of the third module of ergosterol biosynthesis pathway that includes the late steps of the pathway. Catalyzes the reduction of the C14=C15 double bond within 4,4,24-trimethyl ergosta-8,14,24(28)-trienolto produce 4,4-dimethylfecosterol. The third module or late pathway involves the ergosterol synthesis itself through consecutive reactions that mainly occur in the endoplasmic reticulum (ER) membrane. Firstly, the squalene synthase ERG9 catalyzes the condensation of 2 farnesyl pyrophosphate moieties to form squalene, which is the precursor of all steroids. Squalene synthase is crucial for balancing the incorporation of farnesyl diphosphate (FPP) into sterol and nonsterol isoprene synthesis. Secondly, squalene is converted into lanosterol by the consecutive action of the squalene epoxidase ERG1 and the lanosterol synthase ERG7. Then, the delta(24)-sterol C-methyltransferase ERG6 methylates lanosterol at C-24 to produce eburicol. Eburicol is the substrate of the sterol 14-alpha demethylase encoded by CYP51A, CYP51B and CYP51C, to yield 4,4,24-trimethyl ergosta-8,14,24(28)-trienol. CYP51B encodes the enzyme primarily responsible for sterol 14-alpha-demethylation, and plays an essential role in ascospore formation. CYP51A encodes an additional sterol 14-alpha-demethylase, induced on ergosterol depletion and responsible for the intrinsic variation in azole sensitivity. The third CYP51 isoform, CYP51C, does not encode a sterol 14-alpha-demethylase, but is required for full virulence on host wheat ears. The C-14 reductase ERG24 then reduces the C14=C15 double bond which leads to 4,4-dimethylfecosterol. A sequence of further demethylations at C-4, involving the C-4 demethylation complex containing the C-4 methylsterol oxidases ERG25, the sterol-4-alpha-carboxylate 3-dehydrogenase ERG26 and the 3-keto-steroid reductase ERG27, leads to the production of fecosterol via 4-methylfecosterol. ERG28 has a role as a scaffold to help anchor ERG25, ERG26 and ERG27 to the endoplasmic reticulum. The C-8 sterol isomerase ERG2 then catalyzes the reaction which results in unsaturation at C-7 in the B ring of sterols and thus converts fecosterol to episterol. The sterol-C5-desaturases ERG3A and ERG3BB then catalyze the introduction of a C-5 double bond in the B ring to produce 5-dehydroepisterol. The C-22 sterol desaturases ERG5A and ERG5B further convert 5-dehydroepisterol into ergosta-5,7,22,24(28)-tetraen-3beta-ol by forming the C-22(23) double bond in the sterol side chain. Finally, ergosta-5,7,22,24(28)-tetraen-3beta-ol is substrate of the C-24(28) sterol reductase ERG4 to produce ergosterol. This chain is Delta(14)-sterol reductase ERG24A, found in Gibberella zeae (strain ATCC MYA-4620 / CBS 123657 / FGSC 9075 / NRRL 31084 / PH-1) (Wheat head blight fungus).